The following is a 119-amino-acid chain: Beta-2-microglobulin (119 aa).

An N-terminal signal peptide occupies residues 1–20 (MACFVVVALLVLLSLSGLEA). In terms of domain architecture, Ig-like C1-type spans 25 to 114 (PKIQVYSRHP…VTFSTPKTVK (90 aa)). C45 and C100 are joined by a disulfide.

This sequence belongs to the beta-2-microglobulin family. Heterodimer of an alpha chain and a beta chain. Beta-2-microglobulin is the beta-chain of major histocompatibility complex class I molecules.

It is found in the secreted. Component of the class I major histocompatibility complex (MHC). Involved in the presentation of peptide antigens to the immune system. This Leontopithecus chrysopygus (Golden-rumped lion tamarin) protein is Beta-2-microglobulin (B2M).